Reading from the N-terminus, the 72-residue chain is Translation initiation factor IF-1 (72 aa).

An S1-like domain is found at 1 to 72 (MSKEDAIEVM…TRGRIVYRYK (72 aa)).

The protein belongs to the IF-1 family. In terms of assembly, component of the 30S ribosomal translation pre-initiation complex which assembles on the 30S ribosome in the order IF-2 and IF-3, IF-1 and N-formylmethionyl-tRNA(fMet); mRNA recruitment can occur at any time during PIC assembly.

It is found in the cytoplasm. One of the essential components for the initiation of protein synthesis. Stabilizes the binding of IF-2 and IF-3 on the 30S subunit to which N-formylmethionyl-tRNA(fMet) subsequently binds. Helps modulate mRNA selection, yielding the 30S pre-initiation complex (PIC). Upon addition of the 50S ribosomal subunit IF-1, IF-2 and IF-3 are released leaving the mature 70S translation initiation complex. This chain is Translation initiation factor IF-1, found in Koribacter versatilis (strain Ellin345).